A 600-amino-acid chain; its full sequence is CDK5RAP1-like protein (600 aa).

The tract at residues 45-66 (LSSAAHPPPPPPRRLARSGPSR) is disordered. Positions 93–222 (GRIYHETYGC…LPRLLQEVDY (130 aa)) constitute an MTTase N-terminal domain. [4Fe-4S] cluster is bound by residues C102, C139, C185, C260, C264, and C267. Residues 246 to 501 (SDNSVTAFVS…ISTFRETTAK (256 aa)) form the Radical SAM core domain. A TRAM domain is found at 504–580 (DSQVGTVQLV…TASLSGDVIA (77 aa)).

This sequence belongs to the methylthiotransferase family. MiaB subfamily. [4Fe-4S] cluster is required as a cofactor.

Functionally, potential regulator of CDK5 activity. This Oryza sativa subsp. japonica (Rice) protein is CDK5RAP1-like protein.